A 434-amino-acid polypeptide reads, in one-letter code: Prenyltransferase fogH (434 aa).

Residue glutamate 86 coordinates L-tryptophan. Substrate-binding residues include arginine 101, arginine 248, lysine 250, tyrosine 252, and tyrosine 346.

The protein belongs to the tryptophan dimethylallyltransferase family.

The protein operates within secondary metabolite biosynthesis. In terms of biological role, prenyltransferase; part of the gene cluster that mediates the biosynthesis of flavoglaucin and congeners (including aspergin, dihydroauroglaucin and auroglaucin), prenylated salicylaldehyde derivatives carrying a saturated or an unsaturated C-7 side chain. The PKS fogA releases the carboxylic acid (8E,10E,12E)-3,5,7-trihydroxytetradeca-8,10,12-trienoic acid as its product, as well as derivatives with one and two double bonds. FogA is indeed able to reduce the initial triketide, thus being at least partially responsible for the differently saturated heptyl side chains of flavoglaucin congeners. The oxidoreductases fogB, fogC and fogD modify the nascent polyketide in fogA-bound form and, together, fogA, fogB, fogC and fogD are necessary for the formation of the aromatic core and the cyclized PKS products are released as salicyl alcohols. In particular, fogB is responsible for oxidation of a hydroxyl group or reduction of remaining double bond(s) at the C-7 residue whereas fogD is probably involved in the reductive release of the modified PKS products. The cytochrome P450 monooxygenase fogE is then responsible for the hydroxylation at C-3 of the benzene ring. The fogE products are substrates of the prenyltransferase fogH and the prenylated benzyl alcohols are subsequently oxidized by the fogF to produce the final aryl aldehydes flavoglaucin and congeners. The short-chain dehydrogenase fogG does not seem to be involved in the biosynthesis of the prenylated salicylaldehyde derivatives. The polypeptide is Prenyltransferase fogH (Aspergillus ruber (strain CBS 135680)).